A 341-amino-acid chain; its full sequence is Thromboxane A2 receptor (341 aa).

Residues Met1–Trp29 are Extracellular-facing. N-linked (GlcNAc...) asparagine glycosylation is found at Asn4 and Asn16. A helical membrane pass occupies residues Phe30–Ala52. The Cytoplasmic portion of the chain corresponds to Arg53–Leu65. A helical transmembrane segment spans residues Leu66–Ser86. Residues Gln87–His105 are Extracellular-facing. Cys104 and Cys181 are joined by a disulfide. The helical transmembrane segment at Phe106–Ala127 threads the bilayer. At Glu128 to Ala147 the chain is on the cytoplasmic side. A helical transmembrane segment spans residues Trp148–Gly170. The Extracellular portion of the chain corresponds to Arg171–Asp191. A helical membrane pass occupies residues Val192–Val217. Residues Ala218 to Leu244 are Cytoplasmic-facing. The chain crosses the membrane as a helical span at residues Val245 to Gln268. Topologically, residues Thr269–Leu287 are extracellular. A helical transmembrane segment spans residues Leu288–Arg309. Residues Arg310 to Pro341 are Cytoplasmic-facing. Ser328 is subject to Phosphoserine.

The protein belongs to the G-protein coupled receptor 1 family. As to quaternary structure, interacts with RPGRIP1L. Interacts with RACK1; the interaction regulates TBXA2R cell surface expression. In terms of tissue distribution, in the brain, expressed in all types of glial cells. In the kidney, expressed in the mesangial cells of the glomerulus, smooth muscle cells of the renal arterioles, and in transitional cell epithelium of renal pelvis.

The protein resides in the cell membrane. Receptor for thromboxane A2 (TXA2), a potent stimulator of platelet aggregation. The activity of this receptor is mediated by a G-protein that activates a phosphatidylinositol-calcium second messenger system. In the kidney, the binding of TXA2 to glomerular TP receptors causes intense vasoconstriction. Activates phospholipase C and adenylyl cyclase. The protein is Thromboxane A2 receptor (Tbxa2r) of Rattus norvegicus (Rat).